The following is a 366-amino-acid chain: Eukaryotic translation initiation factor 3 subunit H (366 aa).

The region spanning 12 to 161 (VKVEALVVMK…LRAFRLSPKF (150 aa)) is the MPN domain.

It belongs to the eIF-3 subunit H family. As to quaternary structure, component of the eukaryotic translation initiation factor 3 (eIF-3) complex.

It is found in the cytoplasm. Component of the eukaryotic translation initiation factor 3 (eIF-3) complex, which is involved in protein synthesis of a specialized repertoire of mRNAs and, together with other initiation factors, stimulates binding of mRNA and methionyl-tRNAi to the 40S ribosome. The eIF-3 complex specifically targets and initiates translation of a subset of mRNAs involved in cell proliferation. This chain is Eukaryotic translation initiation factor 3 subunit H, found in Emericella nidulans (strain FGSC A4 / ATCC 38163 / CBS 112.46 / NRRL 194 / M139) (Aspergillus nidulans).